The chain runs to 647 residues: METVVRRCPFLSRVPQAFLQKAGKSLLFYAQNCPKMMEIGAKPAPRALSTSAVLCQQVTETPPANEKDKAAKAEVQQAPDGSQQAPDGSQQTADGTQLPSGHPSLASSQGTGSKCPFLAAEMSQGGSSVFRKASLALQEDVQEMHAVREEVAQTSVNPSVINVKTEGGELNGLLKNFQDIMRKQRPERVSHLLQDNLPKSVCTFQYDRFFEKKIDEKKNDHSYRVFKTVNRKAQCFPMADDYSDSLISKKQVSVWCSNDYLGMSRHPRVCGAVIDTLKQHGTGAGGTRNISGTSKFHVDLEQELADLHGKDAALLFSSCFVANDSTLFTLAKMMPGCEIYSDAGNHASMIQGIRNSGVPKYIFRHNDVSHLRELLQRSDPAVPKIVAFETVHSMDGAVCPLEELCDVAHEFGAITFVDEVHAVGLYGLQGGGIGDRDGVMPKMDIISGTLGKAIGCVGGYIASTSSLIDTVRSYAAGFIFTTSLPPMLLAGALESVRILRSTEGRTLRRQHQRNVKLMRQMLMDAGLPVVHCPSHIIPVRVADAAKNTEVCDELMTRHNIYVQAINYPTVPRGEELLRIAPTPHHTPQMMSYFVDNLLATWKRVGLELKPHSSAECNFCRRPLHFEMMSEREKSYFSGMSKLVSAQA.

Residues 1-56 (METVVRRCPFLSRVPQAFLQKAGKSLLFYAQNCPKMMEIGAKPAPRALSTSAVLCQ) constitute a mitochondrion transit peptide. Positions 61–112 (TPPANEKDKAAKAEVQQAPDGSQQAPDGSQQTADGTQLPSGHPSLASSQGTG) are disordered. Over residues 79–112 (PDGSQQAPDGSQQTADGTQLPSGHPSLASSQGTG) the composition is skewed to polar residues. Substrate contacts are provided by Arg-224, Ser-341, and Lys-360. Pyridoxal 5'-phosphate-binding residues include Ser-393, His-421, and Thr-449. Lys-452 is an active-site residue. Lys-452 carries the N6-(pyridoxal phosphate)lysine modification. Pyridoxal 5'-phosphate-binding residues include Thr-481 and Thr-482. Thr-569 lines the substrate pocket. Pro-583 bears the Hydroxyproline mark.

The protein belongs to the class-II pyridoxal-phosphate-dependent aminotransferase family. In terms of assembly, homodimer. Interacts (hydroxylated form) with VHL. It depends on pyridoxal 5'-phosphate as a cofactor. In normoxia, is hydroxylated at Pro-583, promoting interaction with VHL, initiating ubiquitination and subsequent degradation via the proteasome. Post-translationally, ubiquitinated; in normoxia following hydroxylation and interaction with VHL, leading to its subsequent degradation via the proteasome.

Its subcellular location is the mitochondrion inner membrane. The catalysed reaction is succinyl-CoA + glycine + H(+) = 5-aminolevulinate + CO2 + CoA. Its pathway is porphyrin-containing compound metabolism; protoporphyrin-IX biosynthesis; 5-aminolevulinate from glycine: step 1/1. Catalyzes the pyridoxal 5'-phosphate (PLP)-dependent condensation of succinyl-CoA and glycine to form aminolevulinic acid (ALA), with CoA and CO2 as by-products. In Bos taurus (Bovine), this protein is 5-aminolevulinate synthase, non-specific, mitochondrial (ALAS1).